The primary structure comprises 292 residues: Acidic endochitinase (292 aa).

The signal sequence occupies residues 1 to 25 (MAAHKITTTLSIFFLLSSIFRSSDA). Positions 26 to 292 (AGIAIYWGQN…YSDSIKGSIG (267 aa)) constitute a GH18 domain. 2 cysteine pairs are disulfide-bonded: cysteine 45–cysteine 92 and cysteine 75–cysteine 82. Glutamate 152 (proton donor) is an active-site residue. Cysteine 180 and cysteine 209 form a disulfide bridge.

This sequence belongs to the glycosyl hydrolase 18 family. Chitinase class II subfamily.

It localises to the secreted. It is found in the extracellular space. The enzyme catalyses Random endo-hydrolysis of N-acetyl-beta-D-glucosaminide (1-&gt;4)-beta-linkages in chitin and chitodextrins.. This protein functions as a defense against chitin containing fungal pathogens. The chain is Acidic endochitinase from Cucumis sativus (Cucumber).